The primary structure comprises 182 residues: Protein GrpE (182 aa).

A disordered region spans residues 1–35 (MTQENQTPPPEQENLAADPAVETTAETPAVKTPEQ).

The protein belongs to the GrpE family. In terms of assembly, homodimer.

Its subcellular location is the cytoplasm. Participates actively in the response to hyperosmotic and heat shock by preventing the aggregation of stress-denatured proteins, in association with DnaK and GrpE. It is the nucleotide exchange factor for DnaK and may function as a thermosensor. Unfolded proteins bind initially to DnaJ; upon interaction with the DnaJ-bound protein, DnaK hydrolyzes its bound ATP, resulting in the formation of a stable complex. GrpE releases ADP from DnaK; ATP binding to DnaK triggers the release of the substrate protein, thus completing the reaction cycle. Several rounds of ATP-dependent interactions between DnaJ, DnaK and GrpE are required for fully efficient folding. This chain is Protein GrpE, found in Polynucleobacter necessarius subsp. necessarius (strain STIR1).